Here is a 463-residue protein sequence, read N- to C-terminus: Fumarate hydratase class II (463 aa).

Substrate is bound by residues 98-100 (SGT), 129-132 (HPND), 139-141 (SSN), and Thr187. Catalysis depends on His188, which acts as the Proton donor/acceptor. Ser318 is an active-site residue. Substrate is bound by residues Ser319 and 324-326 (KVN).

It belongs to the class-II fumarase/aspartase family. Fumarase subfamily. Homotetramer.

It is found in the cytoplasm. It carries out the reaction (S)-malate = fumarate + H2O. It participates in carbohydrate metabolism; tricarboxylic acid cycle; (S)-malate from fumarate: step 1/1. Involved in the TCA cycle. Catalyzes the stereospecific interconversion of fumarate to L-malate. The protein is Fumarate hydratase class II of Rickettsia bellii (strain RML369-C).